The primary structure comprises 149 residues: CyanoQ (149 aa).

The signal sequence occupies residues 1–21 (MSRLRSLLSLILVLVTTVLVS). Residue Cys22 is the site of N-palmitoyl cysteine attachment. Cys22 is lipidated: S-diacylglycerol cysteine.

The protein belongs to the PsbQ family. CyanoQ subfamily. In terms of assembly, PSII is composed of 1 copy each of membrane proteins PsbA, PsbB, PsbC, PsbD, PsbE, PsbF, PsbH, PsbI, PsbJ, PsbK, PsbL, PsbM, PsbT, PsbX, PsbY, PsbZ, Psb30/Ycf12, peripheral proteins PsbO, CyanoQ (PsbQ), PsbU, PsbV and a large number of cofactors. It forms dimeric complexes. Pull-down experiments with His-tagged PsbQ pull down dimeric, but not monomeric, PSII. In terms of processing, the N-terminus is blocked. Upon expression in E.coli the N-terminus is modified with a diacylglycerol and an acyl group bound to two palmitates and one palmitoleate.

The protein localises to the cellular thylakoid membrane. In terms of biological role, one of the extrinsic, lumenal subunits of photosystem II (PSII), which stabilize and protect the oxygen-evolving complex. PSII is a light-driven water plastoquinone oxidoreductase, using light energy to abstract electrons from H(2)O, generating a proton gradient subsequently used for ATP formation. Plays a role in the stability of the oxygen-evolving center on the luminal side of PSII. Required for optimal photoautotrophic growth in the absence of Ca(2+) or Cl(-), functions in optimizing PSII water oxidation/O(2) evolving activity. Requires PsbO to bind to PSII. The polypeptide is CyanoQ (Synechocystis sp. (strain ATCC 27184 / PCC 6803 / Kazusa)).